A 1047-amino-acid chain; its full sequence is Ribonucleoside-diphosphate reductase subunit alpha (1047 aa).

ATP-cone domains follow at residues 9-111 (CTIV…KAHR), 118-219 (LSVI…ARVR), and 237-327 (FEVL…EALD). Substrate contacts are provided by residues Thr442, 457 to 458 (SC), Gly486, 670 to 674 (NLCTE), and 857 to 861 (PTATI). Cys458 and Cys687 are joined by a disulfide. The active-site Proton acceptor is the Asn670. Cys672 serves as the catalytic Cysteine radical intermediate. The active-site Proton acceptor is the Glu674.

The protein belongs to the ribonucleoside diphosphate reductase large chain family. Tetramer of two alpha and two beta subunits.

The enzyme catalyses a 2'-deoxyribonucleoside 5'-diphosphate + [thioredoxin]-disulfide + H2O = a ribonucleoside 5'-diphosphate + [thioredoxin]-dithiol. Its activity is regulated as follows. Under complex allosteric control mediated by deoxynucleoside triphosphates and ATP binding. The type of nucleotide bound at the specificity site determines substrate preference. It seems probable that ATP makes the enzyme reduce CDP and UDP, dGTP favors ADP reduction and dTTP favors GDP reduction. Its function is as follows. Provides the precursors necessary for DNA synthesis. Catalyzes the biosynthesis of deoxyribonucleotides from the corresponding ribonucleotides. The sequence is that of Ribonucleoside-diphosphate reductase subunit alpha (nrdA) from Chlamydia muridarum (strain MoPn / Nigg).